We begin with the raw amino-acid sequence, 321 residues long: Necdin (321 aa).

The tract at residues 1-96 (MSEQSKDLSD…QPGPAPPAPA (96 aa)) is disordered. Positions 20–35 (SEVHSSPGVSEGVPPS) are enriched in low complexity. In terms of domain architecture, MAGE spans 98–297 (LVQKAHELMW…QAWPSRYREA (200 aa)).

Binds to the transactivation domains of E2F1 and p53. Binds also SV40 large T antigen and adenovirus E1A. Interacts with nucleobindin 1 and 2. Almost ubiquitous. Detected in fetal brain, lung, liver and kidney; in adult heart, brain, placenta, lung, liver, skeletal muscle, kidney, pancreas, spleen, thymus, prostate, testis, ovary, small intestine and colon. Not detected in peripheral blood leukocytes. In brain, restricted to post-mitotic neurons.

It localises to the perikaryon. The protein localises to the nucleus. Growth suppressor that facilitates the entry of the cell into cell cycle arrest. Functionally similar to the retinoblastoma protein it binds to and represses the activity of cell-cycle-promoting proteins such as SV40 large T antigen, adenovirus E1A, and the transcription factor E2F. Necdin also interacts with p53 and works in an additive manner to inhibit cell growth. Also functions as a transcription factor and directly binds to specific guanosine-rich DNA sequences. This is Necdin (NDN) from Homo sapiens (Human).